We begin with the raw amino-acid sequence, 129 residues long: 3-aminoacrylate deaminase RutC (129 aa).

This sequence belongs to the RutC family.

The enzyme catalyses (Z)-3-aminoacrylate + H2O + H(+) = 3-oxopropanoate + NH4(+). Functionally, involved in pyrimidine catabolism. Catalyzes the deamination of 3-aminoacrylate to malonic semialdehyde, a reaction that can also occur spontaneously. RutC may facilitate the reaction and modulate the metabolic fitness, rather than catalyzing essential functions. This Caulobacter vibrioides (strain ATCC 19089 / CIP 103742 / CB 15) (Caulobacter crescentus) protein is 3-aminoacrylate deaminase RutC.